Here is a 332-residue protein sequence, read N- to C-terminus: Methionyl-tRNA formyltransferase (332 aa).

S124–P127 serves as a coordination point for (6S)-5,6,7,8-tetrahydrofolate.

It belongs to the Fmt family.

It carries out the reaction L-methionyl-tRNA(fMet) + (6R)-10-formyltetrahydrofolate = N-formyl-L-methionyl-tRNA(fMet) + (6S)-5,6,7,8-tetrahydrofolate + H(+). Its function is as follows. Attaches a formyl group to the free amino group of methionyl-tRNA(fMet). The formyl group appears to play a dual role in the initiator identity of N-formylmethionyl-tRNA by promoting its recognition by IF2 and preventing the misappropriation of this tRNA by the elongation apparatus. The sequence is that of Methionyl-tRNA formyltransferase from Polynucleobacter asymbioticus (strain DSM 18221 / CIP 109841 / QLW-P1DMWA-1) (Polynucleobacter necessarius subsp. asymbioticus).